The following is a 127-amino-acid chain: Peroxiredoxin-2 (127 aa).

The region spanning 1–125 (LFFYPLDFTF…ALRLVQGXQY (125 aa)) is the Thioredoxin domain. Catalysis depends on C12, which acts as the Cysteine sulfenic acid (-SOH) intermediate. S73 carries the phosphoserine modification.

This sequence belongs to the peroxiredoxin family. AhpC/Prx1 subfamily. Homodimer; disulfide-linked, upon oxidation. 5 homodimers assemble to form a ring-like decamer. Interacts with TIPIN. In terms of processing, the enzyme can be inactivated by further oxidation of the cysteine sulfenic acid (C(P)-SOH) to sulphinic acid (C(P)-SO2H) instead of its condensation to a disulfide bond. It can be reactivated by forming a transient disulfide bond with sulfiredoxin SRXN1, which reduces the cysteine sulfinic acid in an ATP- and Mg-dependent manner. Post-translationally, acetylation increases resistance to transition to high molecular-mass complexes. Deacetylated by HDAC6 which decreases reducing activity.

It localises to the cytoplasm. It carries out the reaction a hydroperoxide + [thioredoxin]-dithiol = an alcohol + [thioredoxin]-disulfide + H2O. Functionally, thiol-specific peroxidase that catalyzes the reduction of hydrogen peroxide and organic hydroperoxides to water and alcohols, respectively. Plays a role in cell protection against oxidative stress by detoxifying peroxides and as sensor of hydrogen peroxide-mediated signaling events. Might participate in the signaling cascades of growth factors and tumor necrosis factor-alpha by regulating the intracellular concentrations of H(2)O(2). The protein is Peroxiredoxin-2 (PRDX2) of Sus scrofa (Pig).